Reading from the N-terminus, the 589-residue chain is Aspartate--tRNA(Asp/Asn) ligase (589 aa).

Residue Glu172 coordinates L-aspartate. Positions 196–199 (QLFK) are aspartate. Residue Arg218 participates in L-aspartate binding. Residues 218–220 (RDE) and Gln227 each bind ATP. His449 is a binding site for L-aspartate. Glu483 contacts ATP. Residue Arg490 coordinates L-aspartate. ATP is bound at residue 535 to 538 (GVDR).

It belongs to the class-II aminoacyl-tRNA synthetase family. Type 1 subfamily. Homodimer.

The protein resides in the cytoplasm. The catalysed reaction is tRNA(Asx) + L-aspartate + ATP = L-aspartyl-tRNA(Asx) + AMP + diphosphate. Aspartyl-tRNA synthetase with relaxed tRNA specificity since it is able to aspartylate not only its cognate tRNA(Asp) but also tRNA(Asn). Reaction proceeds in two steps: L-aspartate is first activated by ATP to form Asp-AMP and then transferred to the acceptor end of tRNA(Asp/Asn). This Francisella philomiragia subsp. philomiragia (strain ATCC 25017 / CCUG 19701 / FSC 153 / O#319-036) protein is Aspartate--tRNA(Asp/Asn) ligase.